Reading from the N-terminus, the 233-residue chain is tRNA (guanine-N(7)-)-methyltransferase (233 aa).

Positions 64, 89, 116, and 138 each coordinate S-adenosyl-L-methionine. Aspartate 138 is an active-site residue. Residues lysine 142, aspartate 174, and 212 to 215 (TRYE) each bind substrate.

The protein belongs to the class I-like SAM-binding methyltransferase superfamily. TrmB family.

It carries out the reaction guanosine(46) in tRNA + S-adenosyl-L-methionine = N(7)-methylguanosine(46) in tRNA + S-adenosyl-L-homocysteine. The protein operates within tRNA modification; N(7)-methylguanine-tRNA biosynthesis. Functionally, catalyzes the formation of N(7)-methylguanine at position 46 (m7G46) in tRNA. The chain is tRNA (guanine-N(7)-)-methyltransferase from Rhizobium johnstonii (strain DSM 114642 / LMG 32736 / 3841) (Rhizobium leguminosarum bv. viciae).